The sequence spans 559 residues: Glucose-6-phosphate isomerase (559 aa).

Glutamate 363 serves as the catalytic Proton donor. Catalysis depends on residues histidine 394 and lysine 523.

Belongs to the GPI family.

The protein resides in the cytoplasm. The catalysed reaction is alpha-D-glucose 6-phosphate = beta-D-fructose 6-phosphate. It functions in the pathway carbohydrate biosynthesis; gluconeogenesis. It participates in carbohydrate degradation; glycolysis; D-glyceraldehyde 3-phosphate and glycerone phosphate from D-glucose: step 2/4. Catalyzes the reversible isomerization of glucose-6-phosphate to fructose-6-phosphate. The sequence is that of Glucose-6-phosphate isomerase from Bartonella henselae (strain ATCC 49882 / DSM 28221 / CCUG 30454 / Houston 1) (Rochalimaea henselae).